Reading from the N-terminus, the 541-residue chain is T-complex protein 1 subunit epsilon (541 aa).

N-acetylalanine is present on A2. A Glycyl lysine isopeptide (Lys-Gly) (interchain with G-Cter in SUMO2) cross-link involves residue K20. At S26 the chain carries Phosphoserine. G53 serves as a coordination point for ADP. G53 provides a ligand contact to ATP. A Mg(2+)-binding site is contributed by D104. G105, T106, T107, and S175 together coordinate ADP. ATP contacts are provided by T106 and T107. Residues K210, K214, K265, K275, and K279 each participate in a glycyl lysine isopeptide (Lys-Gly) (interchain with G-Cter in SUMO2) cross-link. S346 is subject to Phosphoserine. A Glycyl lysine isopeptide (Lys-Gly) (interchain with G-Cter in SUMO2) cross-link involves residue K392. 4 residues coordinate ADP: G422, D492, E508, and K513. ATP is bound at residue G422. Position 539 is a phosphoserine (S539).

The protein belongs to the TCP-1 chaperonin family. Component of the chaperonin-containing T-complex (TRiC), a hexadecamer composed of two identical back-to-back stacked rings enclosing a protein folding chamber. Each ring is made up of eight different subunits: TCP1/CCT1, CCT2, CCT3, CCT4, CCT5, CCT6A/CCT6, CCT7, CCT8. Interacts with PACRG. Interacts with DNAAF4. Interacts with DLEC1. Interacts with SPMAP2. Post-translationally, ubiquitinated by the DCX(DCAF12) complex specifically recognizes the diglutamate (Glu-Glu) at the C-terminus, leading to its degradation.

The protein localises to the cytoplasm. It localises to the cytoskeleton. Its subcellular location is the microtubule organizing center. It is found in the centrosome. It catalyses the reaction ATP + H2O = ADP + phosphate + H(+). Component of the chaperonin-containing T-complex (TRiC), a molecular chaperone complex that assists the folding of actin, tubulin and other proteins upon ATP hydrolysis. The TRiC complex mediates the folding of WRAP53/TCAB1, thereby regulating telomere maintenance. As part of the TRiC complex may play a role in the assembly of BBSome, a complex involved in ciliogenesis regulating transports vesicles to the cilia. The protein is T-complex protein 1 subunit epsilon (Cct5) of Rattus norvegicus (Rat).